Reading from the N-terminus, the 493-residue chain is Ectonucleoside triphosphate diphosphohydrolase 8 (493 aa).

The Cytoplasmic segment spans residues 1–7 (MEYKGKV). The chain crosses the membrane as a helical span at residues 8–28 (VAGLLTATCVFSIIALILSAV). Residues 29–463 (DVKDVFLPPG…ALEHVKGHEP (435 aa)) are Extracellular-facing. N-linked (GlcNAc...) asparagine glycans are attached at residues asparagine 65, asparagine 79, and asparagine 133. Residues cysteine 76 and cysteine 100 are joined by a disulfide bond. Glutamate 166 acts as the Proton acceptor in catalysis. Asparagine 223, asparagine 234, asparagine 267, asparagine 324, asparagine 330, asparagine 361, asparagine 372, asparagine 382, and asparagine 445 each carry an N-linked (GlcNAc...) asparagine glycan. Cysteine 244 and cysteine 291 are joined by a disulfide. An intrachain disulfide couples cysteine 327 to cysteine 333. An intrachain disulfide couples cysteine 379 to cysteine 401. Residues 464–486 (SLWAGAISFIVLAIVAGLVAILL) form a helical membrane-spanning segment. Residues 487 to 493 (QCFWKSK) lie on the Cytoplasmic side of the membrane.

It belongs to the GDA1/CD39 NTPase family. Requires Ca(2+) as cofactor. The cofactor is Mg(2+). N-glycosylated.

The protein localises to the cell membrane. The enzyme catalyses a ribonucleoside 5'-triphosphate + 2 H2O = a ribonucleoside 5'-phosphate + 2 phosphate + 2 H(+). In terms of biological role, canalicular ectonucleoside NTPDase responsible for the main hepatic NTPDase activity. Ectonucleoside ATPases catalyze the hydrolysis of gamma- and beta-phosphate residues of nucleotides, playing a central role in concentration of extracellular nucleotides. This Gallus gallus (Chicken) protein is Ectonucleoside triphosphate diphosphohydrolase 8 (ENTPD8).